We begin with the raw amino-acid sequence, 212 residues long: Orotate phosphoribosyltransferase (212 aa).

Residue lysine 26 participates in 5-phospho-alpha-D-ribose 1-diphosphate binding. 34–35 (FF) is a binding site for orotate. Residues 72-73 (YK), arginine 99, lysine 100, lysine 103, histidine 105, and 124-132 (DDVITVGTA) each bind 5-phospho-alpha-D-ribose 1-diphosphate. 2 residues coordinate orotate: threonine 128 and arginine 156.

This sequence belongs to the purine/pyrimidine phosphoribosyltransferase family. PyrE subfamily. Homodimer. Mg(2+) is required as a cofactor.

It carries out the reaction orotidine 5'-phosphate + diphosphate = orotate + 5-phospho-alpha-D-ribose 1-diphosphate. It functions in the pathway pyrimidine metabolism; UMP biosynthesis via de novo pathway; UMP from orotate: step 1/2. Catalyzes the transfer of a ribosyl phosphate group from 5-phosphoribose 1-diphosphate to orotate, leading to the formation of orotidine monophosphate (OMP). The protein is Orotate phosphoribosyltransferase of Ruthia magnifica subsp. Calyptogena magnifica.